Here is a 132-residue protein sequence, read N- to C-terminus: Small ribosomal subunit protein uS8 (132 aa).

The protein belongs to the universal ribosomal protein uS8 family. Part of the 30S ribosomal subunit. Contacts proteins S5 and S12.

In terms of biological role, one of the primary rRNA binding proteins, it binds directly to 16S rRNA central domain where it helps coordinate assembly of the platform of the 30S subunit. The sequence is that of Small ribosomal subunit protein uS8 from Caulobacter vibrioides (strain ATCC 19089 / CIP 103742 / CB 15) (Caulobacter crescentus).